The following is a 472-amino-acid chain: Methanethiol oxidase (472 aa).

An N-acetylalanine modification is found at alanine 2. Residues serine 111 and serine 467 each carry the phosphoserine modification.

This sequence belongs to the selenium-binding protein family. In terms of assembly, interacts with USP33. Post-translationally, the N-terminus is blocked. Present in liver and colon (at protein level).

The protein localises to the nucleus. The protein resides in the cytoplasm. It is found in the cytosol. It localises to the membrane. The catalysed reaction is methanethiol + O2 + H2O = hydrogen sulfide + formaldehyde + H2O2 + H(+). It functions in the pathway organosulfur degradation. Catalyzes the oxidation of methanethiol, an organosulfur compound known to be produced in substantial amounts by gut bacteria. Selenium-binding protein which may be involved in the sensing of reactive xenobiotics in the cytoplasm. May be involved in intra-Golgi protein transport. This is Methanethiol oxidase (Selenbp1) from Rattus norvegicus (Rat).